Reading from the N-terminus, the 471-residue chain is MIKVSLISLGCAKNLVDSEIMVGHLHQAGMAVIPEAEKADVVIVNTCSFIDSSKEESIGHILEVHQHRGLRKRRKEQKLIVAGCMSQRFSKDLSSSLHDEVDAFIGLDQVTKVAPIIQEIYARERTKTDDPVSFVEGRSTFIPDYDTPRFRLTPKHFAYVKIAEGCNHPCTFCIIPQIRGRHRSRTVESVVAEVRQLVREGVKEINLISQDTTFFGMDTWEQRPNPRTPVDSGRGTALTTLLRQLNAIEGDFWIRLLYTHPAHWSDELIRTIAECPKVARYIDIPLQHISDAMLSRMQRETSGGYIRDLIARIRAGIPGIAVRTTFIVGFPGETDADVDELCAFISETKFERLGVFRYSQEDGTRAAKMPEQLSAKTKEARWHRTMALQKQIAADVSKTYVGRTLRVLVEEPGVARGEADAPDIDGRVYVPRELPVGEFADVTVTGYHDYDLLALPPGQKPAQWKVARQAQ.

In terms of domain architecture, MTTase N-terminal spans 2–122; the sequence is IKVSLISLGC…VAPIIQEIYA (121 aa). [4Fe-4S] cluster-binding residues include C11, C47, C84, C166, C170, and C173. Residues 152-395 form the Radical SAM core domain; the sequence is LTPKHFAYVK…MALQKQIAAD (244 aa). The 61-residue stretch at 398 to 458 folds into the TRAM domain; it reads KTYVGRTLRV…DYDLLALPPG (61 aa).

The protein belongs to the methylthiotransferase family. RimO subfamily. The cofactor is [4Fe-4S] cluster.

It is found in the cytoplasm. It catalyses the reaction L-aspartate(89)-[ribosomal protein uS12]-hydrogen + (sulfur carrier)-SH + AH2 + 2 S-adenosyl-L-methionine = 3-methylsulfanyl-L-aspartate(89)-[ribosomal protein uS12]-hydrogen + (sulfur carrier)-H + 5'-deoxyadenosine + L-methionine + A + S-adenosyl-L-homocysteine + 2 H(+). In terms of biological role, catalyzes the methylthiolation of an aspartic acid residue of ribosomal protein uS12. This Opitutus terrae (strain DSM 11246 / JCM 15787 / PB90-1) protein is Ribosomal protein uS12 methylthiotransferase RimO.